The sequence spans 425 residues: Serine--tRNA ligase 1 (425 aa).

Residue 230 to 232 (TSE) participates in L-serine binding. Residues 261 to 263 (RRE) and Val-277 contribute to the ATP site. Glu-284 is a binding site for L-serine. 348 to 351 (ELTS) serves as a coordination point for ATP. L-serine is bound at residue Thr-382.

This sequence belongs to the class-II aminoacyl-tRNA synthetase family. Type-1 seryl-tRNA synthetase subfamily. As to quaternary structure, homodimer. The tRNA molecule binds across the dimer.

The protein resides in the cytoplasm. The catalysed reaction is tRNA(Ser) + L-serine + ATP = L-seryl-tRNA(Ser) + AMP + diphosphate + H(+). It catalyses the reaction tRNA(Sec) + L-serine + ATP = L-seryl-tRNA(Sec) + AMP + diphosphate + H(+). The protein operates within aminoacyl-tRNA biosynthesis; selenocysteinyl-tRNA(Sec) biosynthesis; L-seryl-tRNA(Sec) from L-serine and tRNA(Sec): step 1/1. Catalyzes the attachment of serine to tRNA(Ser). Is also able to aminoacylate tRNA(Sec) with serine, to form the misacylated tRNA L-seryl-tRNA(Sec), which will be further converted into selenocysteinyl-tRNA(Sec). This is Serine--tRNA ligase 1 from Streptomyces avermitilis (strain ATCC 31267 / DSM 46492 / JCM 5070 / NBRC 14893 / NCIMB 12804 / NRRL 8165 / MA-4680).